Reading from the N-terminus, the 181-residue chain is Small ribosomal subunit protein cS23 (181 aa).

The interval 1-40 (MLPMSVHPATTPALASRPRVSLPRPSTPSSSSSLVHLKSR) is disordered. A compositionally biased stretch (low complexity) spans 14-36 (LASRPRVSLPRPSTPSSSSSLVH).

It belongs to the chloroplast-specific ribosomal protein cS23 family. Part of the 30S ribosomal subunit.

Its subcellular location is the plastid. The protein localises to the chloroplast. Its function is as follows. Component of the chloroplast ribosome (chloro-ribosome), a dedicated translation machinery responsible for the synthesis of chloroplast genome-encoded proteins, including proteins of the transcription and translation machinery and components of the photosynthetic apparatus. The sequence is that of Small ribosomal subunit protein cS23 (PSRP3) from Hordeum vulgare (Barley).